A 108-amino-acid polypeptide reads, in one-letter code: Thiosulfate sulfurtransferase GlpE (108 aa).

Residues 17–105 (QEKEAVLVDI…WQRQFPAEVA (89 aa)) enclose the Rhodanese domain. The active-site Cysteine persulfide intermediate is cysteine 65.

The protein belongs to the GlpE family.

The protein localises to the cytoplasm. The catalysed reaction is thiosulfate + hydrogen cyanide = thiocyanate + sulfite + 2 H(+). It catalyses the reaction thiosulfate + [thioredoxin]-dithiol = [thioredoxin]-disulfide + hydrogen sulfide + sulfite + 2 H(+). Functionally, transferase that catalyzes the transfer of sulfur from thiosulfate to thiophilic acceptors such as cyanide or dithiols. May function in a CysM-independent thiosulfate assimilation pathway by catalyzing the conversion of thiosulfate to sulfite, which can then be used for L-cysteine biosynthesis. In Shigella dysenteriae serotype 1 (strain Sd197), this protein is Thiosulfate sulfurtransferase GlpE.